The primary structure comprises 279 residues: Armadillo repeat-containing protein 1 (279 aa).

Residues 36-78 (GCLPGLILFLDHPSPPVVHSALLALRYLAECRANREKMKGELG) form an ARM repeat. The tract at residues 236–257 (EYLPEDESPSKEQDKAVSRVGS) is disordered. Basic and acidic residues predominate over residues 243–252 (SPSKEQDKAV).

Interacts with mitochondrial contact site and cristae organizing system (MICOS) complex components IMMT/MIC60 and MICOS10/MIC10. Interacts with mitochondrial outer membrane sorting assembly machinery (SAM) complex components SAMM50 and MTX1.

It localises to the cytoplasm. The protein resides in the mitochondrion. It is found in the mitochondrion outer membrane. Functionally, in association with mitochondrial contact site and cristae organizing system (MICOS) complex components and mitochondrial outer membrane sorting assembly machinery (SAM) complex components may regulate mitochondrial dynamics playing a role in determining mitochondrial length, distribution and motility. The protein is Armadillo repeat-containing protein 1 (ARMC1) of Gallus gallus (Chicken).